Here is a 482-residue protein sequence, read N- to C-terminus: Cysteine--tRNA ligase (482 aa).

C29 lines the Zn(2+) pocket. Positions P31 to H41 match the 'HIGH' region motif. Zn(2+)-binding residues include C210, H235, and E239. Residues K272–S276 carry the 'KMSKS' region motif. Position 275 (K275) interacts with ATP.

It belongs to the class-I aminoacyl-tRNA synthetase family. As to quaternary structure, monomer. Requires Zn(2+) as cofactor.

It localises to the cytoplasm. The enzyme catalyses tRNA(Cys) + L-cysteine + ATP = L-cysteinyl-tRNA(Cys) + AMP + diphosphate. This chain is Cysteine--tRNA ligase, found in Anaeromyxobacter sp. (strain Fw109-5).